The chain runs to 170 residues: ATP synthase subunit b (170 aa).

The helical transmembrane segment at 3-23 (IKILFFLALPFLAYASEHGGT) threads the bilayer.

It belongs to the ATPase B chain family. F-type ATPases have 2 components, F(1) - the catalytic core - and F(0) - the membrane proton channel. F(1) has five subunits: alpha(3), beta(3), gamma(1), delta(1), epsilon(1). F(0) has three main subunits: a(1), b(2) and c(10-14). The alpha and beta chains form an alternating ring which encloses part of the gamma chain. F(1) is attached to F(0) by a central stalk formed by the gamma and epsilon chains, while a peripheral stalk is formed by the delta and b chains.

It is found in the cell inner membrane. In terms of biological role, f(1)F(0) ATP synthase produces ATP from ADP in the presence of a proton or sodium gradient. F-type ATPases consist of two structural domains, F(1) containing the extramembraneous catalytic core and F(0) containing the membrane proton channel, linked together by a central stalk and a peripheral stalk. During catalysis, ATP synthesis in the catalytic domain of F(1) is coupled via a rotary mechanism of the central stalk subunits to proton translocation. Its function is as follows. Component of the F(0) channel, it forms part of the peripheral stalk, linking F(1) to F(0). The sequence is that of ATP synthase subunit b from Campylobacter concisus (strain 13826).